Reading from the N-terminus, the 68-residue chain is U1-agatoxin-Ta1c (68 aa).

The signal sequence occupies residues 1 to 17 (MKLQLMICLVLLPCFFC). 3 disulfide bridges follow: C23–C53, C39–C49, and C42–C62. At K67 the chain carries Lysine amide.

This sequence belongs to the helical arthropod-neuropeptide-derived (HAND) family. In terms of tissue distribution, expressed by the venom gland.

The protein localises to the secreted. Functionally, toxin that paralyzes insects. May have a direct effect on the insect central nervous system. The chain is U1-agatoxin-Ta1c from Eratigena agrestis (Hobo spider).